We begin with the raw amino-acid sequence, 500 residues long: L-arabinose isomerase (500 aa).

Mn(2+) contacts are provided by E306, E333, H350, and H450.

This sequence belongs to the arabinose isomerase family. As to quaternary structure, homohexamer. Mn(2+) is required as a cofactor.

It carries out the reaction beta-L-arabinopyranose = L-ribulose. The protein operates within carbohydrate degradation; L-arabinose degradation via L-ribulose; D-xylulose 5-phosphate from L-arabinose (bacterial route): step 1/3. Functionally, catalyzes the conversion of L-arabinose to L-ribulose. The protein is L-arabinose isomerase of Salmonella arizonae (strain ATCC BAA-731 / CDC346-86 / RSK2980).